Consider the following 187-residue polypeptide: Elongation factor P (187 aa).

The protein belongs to the elongation factor P family.

The protein localises to the cytoplasm. It functions in the pathway protein biosynthesis; polypeptide chain elongation. Involved in peptide bond synthesis. Stimulates efficient translation and peptide-bond synthesis on native or reconstituted 70S ribosomes in vitro. Probably functions indirectly by altering the affinity of the ribosome for aminoacyl-tRNA, thus increasing their reactivity as acceptors for peptidyl transferase. This is Elongation factor P from Granulibacter bethesdensis (strain ATCC BAA-1260 / CGDNIH1).